The following is a 463-amino-acid chain: MAGAGERKGKKDDNGIGTAIDFVLSNARLVLGVGGAAMLGIATLAVKRMYDRAISAPTSPTRLSHSGKRSWEEPNWMGSPQLLNRDMKTGLSRSLQTLPTDSSAFDTDTFCPPRPKPVARKGQVDLKKSRLRMSLQEKLLPYYRNRAAIPAGEQARAKQAAVDICAELRSFLRAKLPDMPLRDVYLSGSLYDDLQVVTADHIQLIVPLVLEQNLWSCIPGEDTIMNVPGFFLVRRENPEYFPRGSSYWDRCVVGGYLSPKTVADTFEKVVAGSINWPAIGSLLDYVIRPAPPPEALTLEVQYERDKHLFIDFLPSVTLGDTVLVAKPHRLAQYDNLWRLSLRPAETARLRALDQADSGCRSLCLKILKAICKSTPALGHLTASQLTNVILHLAQEEADWSPDMLADRFLQALRGLISYLEAGVLPSALNPKVNLFAELTPEEIDELGYTLYCSLSEPEVLLQT.

The Mitochondrial intermembrane portion of the chain corresponds to 1 to 23; it reads MAGAGERKGKKDDNGIGTAIDFV. The helical transmembrane segment at 24-46 threads the bilayer; it reads LSNARLVLGVGGAAMLGIATLAV. Residues 47–463 are Cytoplasmic-facing; sequence KRMYDRAISA…LSEPEVLLQT (417 aa). A dimerization region spans residues 49-195; that stretch reads MYDRAISAPT…LSGSLYDDLQ (147 aa). Ser-55, Ser-59, Ser-79, and Ser-94 each carry phosphoserine. The tract at residues 57 to 79 is disordered; it reads PTSPTRLSHSGKRSWEEPNWMGS. A disordered region spans residues 104 to 123; the sequence is AFDTDTFCPPRPKPVARKGQ. The tract at residues 160 to 169 is important for interaction with DNM1L; that stretch reads AAVDICAELR. Positions 187, 189, and 201 each coordinate ADP. An important for interaction with DNM1L region spans residues 234-243; it reads RRENPEYFPR. Positions 340, 342, and 368 each coordinate ADP.

This sequence belongs to the MID49/MID51 family. As to quaternary structure, homodimer. Interacts with DNM1L.

It localises to the mitochondrion outer membrane. In terms of biological role, mitochondrial outer membrane protein which regulates mitochondrial fission/fusion dynamics. Promotes the recruitment and association of the fission mediator dynamin-related protein 1 (DNM1L) to the mitochondrial surface independently of the mitochondrial fission FIS1 and MFF proteins. Regulates DNM1L GTPase activity and DNM1L oligomerization. Binds ADP and can also bind GDP, although with lower affinity. Does not bind CDP, UDP, ATP, AMP or GTP. Inhibits DNM1L GTPase activity in the absence of bound ADP. Requires ADP to stimulate DNM1L GTPase activity and the assembly of DNM1L into long, oligomeric tubules with a spiral pattern, as opposed to the ring-like DNM1L oligomers observed in the absence of bound ADP. Does not require ADP for its function in recruiting DNM1L. In Pongo abelii (Sumatran orangutan), this protein is Mitochondrial dynamics protein MID51 (MIEF1).